The chain runs to 303 residues: Hemolysin C (303 aa).

CBS domains are found at residues 81 to 143 (MVPR…NSPL) and 146 to 203 (LIRK…IDDE).

The protein belongs to the UPF0053 family. Hemolysin C subfamily.

The chain is Hemolysin C (tlyC) from Rickettsia prowazekii (strain Madrid E).